Here is a 333-residue protein sequence, read N- to C-terminus: MTLLFDKTGPIDSPTLAPASVDNHCRSPDRSAAARVIEIGLVNNMSDAALRATERQFMRLLRAGSGEHLVRLHCFALPSVQRSPATRQRIDSLYADIADLRHTRLDALIVTGAEPRAATLQSEPYWDEMRALVDWAEANTRSTIWSCLAAHAAVLHLDGIERERLPQKCSGVFAGEQVNDDALLSDLPSPLKVPHSRLNDLAADRLAARGYEVLTHAPNAGVDIFARQGRSRFVFFQGHPEYDATSLQREYLRDIGRFLTGERHDYPEFPVDYFDADIEDALDAFRAEAEAARDPAIIARLPHLALRQGTAEGIETTANALFRNWLISLASEP.

The active-site Acyl-thioester intermediate is the Cys147. The substrate site is built by Lys168 and Ser196. The active-site Proton acceptor is the His239. Glu241 is an active-site residue. Substrate is bound at residue Arg253.

The protein belongs to the MetA family.

It is found in the cytoplasm. It catalyses the reaction L-homoserine + succinyl-CoA = O-succinyl-L-homoserine + CoA. It participates in amino-acid biosynthesis; L-methionine biosynthesis via de novo pathway; O-succinyl-L-homoserine from L-homoserine: step 1/1. Transfers a succinyl group from succinyl-CoA to L-homoserine, forming succinyl-L-homoserine. The sequence is that of Homoserine O-succinyltransferase from Rhodopseudomonas palustris.